The sequence spans 177 residues: T-cell receptor beta chain C region (177 aa).

Positions 1–150 (EDLANVSAPQ…GVLSATVLYE (150 aa)) are c region. N-linked (GlcNAc...) asparagine glycosylation is found at Asn5 and Asn22. Cys31 and Cys96 form a disulfide bridge. Residues 146-168 (TVLYEILLGKATLYAVLVSALVL) form a helical membrane-spanning segment. The Cytoplasmic portion of the chain corresponds to 169–177 (MAMVKRKDS).

The protein resides in the membrane. The polypeptide is T-cell receptor beta chain C region (Oryctolagus cuniculus (Rabbit)).